The primary structure comprises 123 residues: Fluoride-specific ion channel FluC (123 aa).

The next 4 helical transmembrane spans lie at 4–24 (VYIA…SGWV), 31–51 (ALPY…GLLM), 64–83 (IRMG…STFS), and 100–120 (ANIL…IFLA). Residues Gly74 and Thr77 each contribute to the Na(+) site.

It belongs to the fluoride channel Fluc/FEX (TC 1.A.43) family.

The protein localises to the cell inner membrane. It carries out the reaction fluoride(in) = fluoride(out). Its activity is regulated as follows. Na(+) is not transported, but it plays an essential structural role and its presence is essential for fluoride channel function. Its function is as follows. Fluoride-specific ion channel. Important for reducing fluoride concentration in the cell, thus reducing its toxicity. This chain is Fluoride-specific ion channel FluC, found in Syntrophotalea carbinolica (strain DSM 2380 / NBRC 103641 / GraBd1) (Pelobacter carbinolicus).